Reading from the N-terminus, the 357-residue chain is Sorbitol dehydrogenase (357 aa).

Residue Ala-2 is modified to N-acetylalanine. Position 45 (Cys-45) interacts with Zn(2+). Tyr-51 contacts substrate. Zn(2+) is bound by residues His-70 and Glu-71. Residue Glu-156 participates in substrate binding. Ile-184, Asp-204, and Arg-209 together coordinate NAD(+). Residues Ser-211 and Ser-225 each carry the phosphoserine modification. Residues 273-275 (VGL) and 297-299 (VFR) contribute to the NAD(+) site. Arg-299 and Tyr-300 together coordinate substrate.

This sequence belongs to the zinc-containing alcohol dehydrogenase family. In terms of assembly, homotetramer. The cofactor is Zn(2+).

Its subcellular location is the mitochondrion membrane. It localises to the cell projection. The protein resides in the cilium. The protein localises to the flagellum. The catalysed reaction is xylitol + NAD(+) = D-xylulose + NADH + H(+). It catalyses the reaction L-iditol + NAD(+) = keto-L-sorbose + NADH + H(+). It carries out the reaction keto-D-fructose + NADH + H(+) = D-sorbitol + NAD(+). Polyol dehydrogenase that catalyzes the reversible NAD(+)-dependent oxidation of various sugar alcohols. Is active with xylitol, L-iditol and D-sorbitol (D-glucitol) as substrates, leading to the C2-oxidized products D-xylulose, L-sorbose and D-fructose, respectively. Is a key enzyme in the polyol pathway that interconverts glucose and fructose via sorbitol, which constitutes an important alternate route for glucose metabolism. May play a role in sperm motility by using sorbitol as an alternative energy source for sperm motility. This Pongo abelii (Sumatran orangutan) protein is Sorbitol dehydrogenase (SORD).